A 238-amino-acid polypeptide reads, in one-letter code: Orotidine 5'-phosphate decarboxylase (238 aa).

Substrate contacts are provided by residues Asp10, Lys32, 59 to 68, Thr122, Arg184, Gln193, Gly213, and Arg214; that span reads DLKLHDIPNT. Lys61 acts as the Proton donor in catalysis.

The protein belongs to the OMP decarboxylase family. Type 1 subfamily. In terms of assembly, homodimer.

It catalyses the reaction orotidine 5'-phosphate + H(+) = UMP + CO2. The protein operates within pyrimidine metabolism; UMP biosynthesis via de novo pathway; UMP from orotate: step 2/2. Catalyzes the decarboxylation of orotidine 5'-monophosphate (OMP) to uridine 5'-monophosphate (UMP). This chain is Orotidine 5'-phosphate decarboxylase, found in Bacillus cytotoxicus (strain DSM 22905 / CIP 110041 / 391-98 / NVH 391-98).